The chain runs to 586 residues: A-type ATP synthase subunit A (586 aa).

232–239 (GPFGSGKT) provides a ligand contact to ATP.

The protein belongs to the ATPase alpha/beta chains family. As to quaternary structure, has multiple subunits with at least A(3), B(3), C, D, E, F, H, I and proteolipid K(x).

It is found in the cell membrane. The enzyme catalyses ATP + H2O + 4 H(+)(in) = ADP + phosphate + 5 H(+)(out). Its function is as follows. Component of the A-type ATP synthase that produces ATP from ADP in the presence of a proton gradient across the membrane. The A chain is the catalytic subunit. This Methanococcus maripaludis (strain C5 / ATCC BAA-1333) protein is A-type ATP synthase subunit A.